Consider the following 382-residue polypeptide: MKKHLNLLREFSVPLVAGVVVALFWANLDPAGYRAFDSTPFWGSLSFHFISNELFMTLFFGIAAVEITQSCMPGGDLNPISRAVNPLFGTLGGVLGPVLVYLGLNALVGLPELRNGWGIPTATDIALAWLAARMVFGPGHPAVSYLLLLAVADDAIGLAIIALFYPDPNHPVVAAWLLLTLLGMLVAWGLGRRRVRSYWPYILLGGSLSWIGLHQAHLHPALALVFIIPFLPHRLRESRHLFDDDPGDRSPLAQFEHEWKVVVDFGLFLFGLANAGVEFSSIGTVTWLVLVSLLVGKTVGIFGFGLLAERLGFRRPRGMKRRDLLVAGVVAGTGFTVALFVSGSAFSDPVIQAAAKMGAMFSLAAALIGMLLGQLLRIRKVH.

A run of 10 helical transmembrane segments spans residues 11–31 (FSVP…LDPA), 45–65 (LSFH…IAAV), 91–111 (LGGV…VGLP), 116–136 (GWGI…RMVF), 145–165 (YLLL…ALFY), 171–191 (PVVA…WGLG), 197–214 (SYWP…IGLH), 287–307 (WLVL…FGLL), 324–344 (LLVA…VSGS), and 353–373 (AAAK…MLLG).

This sequence belongs to the NhaA Na(+)/H(+) (TC 2.A.33) antiporter family.

The protein resides in the cell inner membrane. The enzyme catalyses Na(+)(in) + 2 H(+)(out) = Na(+)(out) + 2 H(+)(in). Functionally, na(+)/H(+) antiporter that extrudes sodium in exchange for external protons. The protein is Na(+)/H(+) antiporter NhaA 2 of Pelobacter propionicus (strain DSM 2379 / NBRC 103807 / OttBd1).